The chain runs to 131 residues: Glycine cleavage system H protein (131 aa).

One can recognise a Lipoyl-binding domain in the interval 24-106 (RAIVGISDHA…YGEGWIMVIE (83 aa)). The residue at position 65 (Lys65) is an N6-lipoyllysine.

The protein belongs to the GcvH family. The glycine cleavage system is composed of four proteins: P, T, L and H. Requires (R)-lipoate as cofactor.

Functionally, the glycine cleavage system catalyzes the degradation of glycine. The H protein shuttles the methylamine group of glycine from the P protein to the T protein. In Xylella fastidiosa (strain 9a5c), this protein is Glycine cleavage system H protein.